Reading from the N-terminus, the 399-residue chain is Elongation factor Tu (399 aa).

The 200-residue stretch at 10–209 folds into the tr-type G domain; sequence KPHVNIGTIG…AVDSYIPTPV (200 aa). The interval 19-26 is G1; the sequence is GHVDHGKT. 19-26 lines the GTP pocket; sequence GHVDHGKT. A Mg(2+)-binding site is contributed by T26. The tract at residues 60–64 is G2; it reads GITIA. Positions 81–84 are G3; it reads DCPG. GTP contacts are provided by residues 81–85 and 136–139; these read DCPGH and NKAD. The G4 stretch occupies residues 136–139; the sequence is NKAD. Residues 174–176 form a G5 region; the sequence is SAL.

This sequence belongs to the TRAFAC class translation factor GTPase superfamily. Classic translation factor GTPase family. EF-Tu/EF-1A subfamily. As to quaternary structure, monomer.

Its subcellular location is the cytoplasm. The enzyme catalyses GTP + H2O = GDP + phosphate + H(+). Its function is as follows. GTP hydrolase that promotes the GTP-dependent binding of aminoacyl-tRNA to the A-site of ribosomes during protein biosynthesis. This chain is Elongation factor Tu, found in Campylobacter concisus (strain 13826).